Reading from the N-terminus, the 132-residue chain is Small ribosomal subunit protein uS8 (132 aa).

It belongs to the universal ribosomal protein uS8 family. Part of the 30S ribosomal subunit. Contacts proteins S5 and S12.

One of the primary rRNA binding proteins, it binds directly to 16S rRNA central domain where it helps coordinate assembly of the platform of the 30S subunit. The polypeptide is Small ribosomal subunit protein uS8 (Kineococcus radiotolerans (strain ATCC BAA-149 / DSM 14245 / SRS30216)).